Consider the following 206-residue polypeptide: Peptidyl-tRNA hydrolase (206 aa).

Tyr19 serves as a coordination point for tRNA. The Proton acceptor role is filled by His24. 3 residues coordinate tRNA: Phe70, Asn72, and Asn118.

It belongs to the PTH family. In terms of assembly, monomer.

It localises to the cytoplasm. The enzyme catalyses an N-acyl-L-alpha-aminoacyl-tRNA + H2O = an N-acyl-L-amino acid + a tRNA + H(+). Functionally, hydrolyzes ribosome-free peptidyl-tRNAs (with 1 or more amino acids incorporated), which drop off the ribosome during protein synthesis, or as a result of ribosome stalling. Its function is as follows. Catalyzes the release of premature peptidyl moieties from peptidyl-tRNA molecules trapped in stalled 50S ribosomal subunits, and thus maintains levels of free tRNAs and 50S ribosomes. This chain is Peptidyl-tRNA hydrolase, found in Synechococcus sp. (strain CC9902).